A 348-amino-acid chain; its full sequence is Outer membrane protein A (348 aa).

The signal sequence occupies residues 1–21; it reads MKKTAIAIAVALAGFATVAQA. The next 8 membrane-spanning stretches (beta stranded) occupy residues 27–37, 55–66, 70–78, 96–107, 112–120, 146–155, 160–167, and 186–194; these read TWYTGAKLGWS, QLGAGAFGGYQV, VGFEMGYDW, QGVQLTAKLGYP, LDIYTRLGG, PVFAGGVEYA, IATRLEYQ, and LLSLGVSYR. Residues 201 to 210 are hinge-like; it reads APVVAPAPAP. 3 consecutive repeat copies span residues 205–206, 207–208, and 209–210. A 3 X 2 AA tandem repeats of A-P region spans residues 205-210; that stretch reads APAPAP. Positions 212–340 constitute an OmpA-like domain; the sequence is VQTKHFTLKS…RVEIEVKGIK (129 aa). An intrachain disulfide couples cysteine 313 to cysteine 325.

The protein belongs to the outer membrane OOP (TC 1.B.6) superfamily. OmpA family. As to quaternary structure, monomer and homodimer. (Microbial infection) Upon infection with phage Sf6 associates with the mature bacteriophage capsid. Was originally suggested to be within the bacteriophage capsid. This has been disproven.

Its subcellular location is the extracellular vesicle. The protein resides in the cell outer membrane. Its function is as follows. With TolR probably plays a role in maintaining the position of the peptidoglycan cell wall in the periplasm. Acts as a porin with low permeability that allows slow penetration of small solutes; an internal gate slows down solute passage. Required for conjugation with F-type plasmids; probably serves as the mating receptor on recipient cells. Functionally, (Microbial infection) Serves as a secondary receptor during phage Sf6 infection; infection requires both lipopolysaccharide (LPS) and the OmpA beta-barrel. This Shigella flexneri protein is Outer membrane protein A.